A 180-amino-acid chain; its full sequence is D-lyxose ketol-isomerase (180 aa).

K62 provides a ligand contact to D-fructose. Mn(2+)-binding residues include H75 and H77. K86 serves as a coordination point for D-fructose. Mn(2+) contacts are provided by E88 and H143. D-fructose contacts are provided by E156, D166, and R175.

The protein belongs to the D-lyxose ketol-isomerase family. In terms of assembly, homodimer; disulfide-linked. Stabilized by a disulfide bond between the two monomers of the dimeric enzyme and increased hydrophobicity at the dimer interface. Requires Mn(2+) as cofactor.

It catalyses the reaction D-lyxose = D-xylulose. Sugar isomerase that catalyzes the reversible isomerization of D-lyxose to D-xylulose. Is highly specific for the substrate D-lyxose, showing less than 2% activity towards mannose and other substrates reported for lyxose isomerases. The chain is D-lyxose ketol-isomerase from Thermofilum sp. (strain ex4484_79).